Consider the following 295-residue polypeptide: GTPase Era (295 aa).

In terms of domain architecture, Era-type G spans 3–170; the sequence is KSGFVTIVGR…VDLMKTELPE (168 aa). The segment at 11 to 18 is G1; the sequence is GRPNVGKS. A GTP-binding site is contributed by 11–18; sequence GRPNVGKS. Residues 37 to 41 are G2; it reads QTTRN. A G3 region spans residues 58–61; it reads DTPG. GTP is bound by residues 58–62 and 120–123; these read DTPGI and NKID. The G4 stretch occupies residues 120–123; it reads NKID. A G5 region spans residues 149–151; that stretch reads IAA. One can recognise a KH type-2 domain in the interval 201–278; it reads LRDEVPHGIA…NVKIWVKVRK (78 aa).

This sequence belongs to the TRAFAC class TrmE-Era-EngA-EngB-Septin-like GTPase superfamily. Era GTPase family. Monomer.

The protein resides in the cytoplasm. It localises to the cell membrane. Its function is as follows. An essential GTPase that binds both GDP and GTP, with rapid nucleotide exchange. Plays a role in 16S rRNA processing and 30S ribosomal subunit biogenesis and possibly also in cell cycle regulation and energy metabolism. The sequence is that of GTPase Era from Clostridium botulinum (strain Eklund 17B / Type B).